The following is a 1673-amino-acid chain: AF4/FMR2 family member lilli (1673 aa).

9 disordered regions span residues M1 to N24, Y54 to I80, S125 to K302, Q407 to N534, V575 to W604, R722 to L1086, Q1114 to P1133, R1141 to T1160, and K1187 to E1315. The segment covering R71–I80 has biased composition (basic and acidic residues). Low complexity-rich tracts occupy residues S146 to Q180 and P223 to V244. At T420 the chain carries Phosphothreonine. Residues L428–S441 are compositionally biased toward basic and acidic residues. A compositionally biased stretch (acidic residues) spans L443–D454. Phosphoserine is present on residues S450 and S452. Positions G465–N486 are enriched in low complexity. Basic residues predominate over residues H491–Q500. Over residues L501–Q525 the composition is skewed to low complexity. The segment covering T577 to S586 has biased composition (gly residues). Residues K594–W604 show a composition bias toward polar residues. Residues S724–E757 are compositionally biased toward low complexity. The segment covering Q775 to V788 has biased composition (polar residues). The span at Q802–A812 shows a compositional bias: basic residues. Phosphoserine is present on residues S821 and S822. The segment at residues K851–S863 is a DNA-binding region (a.T hook). Residues Q860–A898 show a composition bias toward low complexity. 2 positions are modified to phosphoserine: S871 and S873. The span at S909–T919 shows a compositional bias: polar residues. Low complexity-rich tracts occupy residues S949–S965 and G993–S1004. Residues T1011–A1022 show a composition bias toward polar residues. The segment covering S1034 to S1060 has biased composition (low complexity). Residues E1065 to K1082 show a composition bias toward basic and acidic residues. A compositionally biased stretch (polar residues) spans P1190 to N1205. 2 stretches are compositionally biased toward basic and acidic residues: residues E1226–F1243 and F1252–P1282. Residue S1362 is modified to Phosphoserine. Residue T1364 is modified to Phosphothreonine. Low complexity predominate over residues N1564–N1583. Residues N1564–R1588 are disordered.

The protein belongs to the AF4 family. In terms of assembly, component of the super elongation complex (SEC), at least composed of Ell, Cdk9, cyclin-T (CycT), lilli and ear.

The protein resides in the nucleus. Functionally, has a role in transcriptional regulation. Acts in parallel with the Ras/MAPK and the PI3K/PKB pathways in the control of cell identity and cellular growth. Essential for regulation of the cytoskeleton and cell growth but not for cell proliferation or growth rate. Required specifically for the microtubule-based basal transport of lipid droplets. Plays a partially redundant function downstream of Raf in cell fate specification in the developing eye. Pair-rule protein that regulates embryonic cellularization, gastrulation and segmentation. This Drosophila melanogaster (Fruit fly) protein is AF4/FMR2 family member lilli.